Here is a 160-residue protein sequence, read N- to C-terminus: 6,7-dimethyl-8-ribityllumazine synthase (160 aa).

5-amino-6-(D-ribitylamino)uracil contacts are provided by residues phenylalanine 22, 57 to 59 (TYE), and 81 to 83 (TII). 86-87 (QT) serves as a coordination point for (2S)-2-hydroxy-3-oxobutyl phosphate. Residue histidine 89 is the Proton donor of the active site. Leucine 114 serves as a coordination point for 5-amino-6-(D-ribitylamino)uracil. (2S)-2-hydroxy-3-oxobutyl phosphate is bound at residue arginine 128.

The protein belongs to the DMRL synthase family. In terms of assembly, forms an icosahedral capsid composed of 60 subunits, arranged as a dodecamer of pentamers.

It carries out the reaction (2S)-2-hydroxy-3-oxobutyl phosphate + 5-amino-6-(D-ribitylamino)uracil = 6,7-dimethyl-8-(1-D-ribityl)lumazine + phosphate + 2 H2O + H(+). It functions in the pathway cofactor biosynthesis; riboflavin biosynthesis; riboflavin from 2-hydroxy-3-oxobutyl phosphate and 5-amino-6-(D-ribitylamino)uracil: step 1/2. Functionally, catalyzes the formation of 6,7-dimethyl-8-ribityllumazine by condensation of 5-amino-6-(D-ribitylamino)uracil with 3,4-dihydroxy-2-butanone 4-phosphate. This is the penultimate step in the biosynthesis of riboflavin. The sequence is that of 6,7-dimethyl-8-ribityllumazine synthase from Buchnera aphidicola subsp. Acyrthosiphon pisum (strain Tuc7).